The primary structure comprises 10287 residues: Putative E3 ubiquitin-protein ligase protein PFF1365c (10287 aa).

The TPR 1 repeat unit spans residues 47-82 (TRFFKSISNYGEFLLLQSSSRVISSYEHILRLLHQA). The segment covering 566–589 (TNKSRDNINQNTNTNNNNNNNNNN) has biased composition (low complexity). Positions 566–592 (TNKSRDNINQNTNTNNNNNNNNNNDGD) are disordered. The stretch at 631-665 (YPMFLKIQNKPQRCLKDISKPCEYYSNTLPIYGSY) is one TPR 2 repeat. Disordered stretches follow at residues 740–823 (KSSV…NKKK), 1221–1251 (NNSNYNDNSHYTHNSLKSQNISSSTYSSSSS), and 1599–1670 (YVDD…DDNN). Composition is skewed to low complexity over residues 767–810 (KANN…NNNN), 1221–1235 (NNSNYNDNSHYTHNS), and 1242–1251 (SSSTYSSSSS). Over residues 1601 to 1635 (DDNEEDEGEEDKSEDYEYCDDEQQNDVYEDTEEES) the composition is skewed to acidic residues. A compositionally biased stretch (basic residues) spans 1641–1653 (RKERRVHQKKKNS). Low complexity predominate over residues 1654 to 1670 (KVSINKKTNNSLSDDNN). A run of 3 helical transmembrane segments spans residues 1821–1841 (ACTFIISGIIPCLGYVTTLFV), 1860–1880 (LKMALNIWPMFLKITLQGLLT), and 1900–1920 (ECCISITSLATHFLTLFTIMI). The segment covering 2070-2080 (SRRGIPLKKKS) has biased composition (basic residues). Residues 2070–2112 (SRRGIPLKKKSERNNSKEENVNNMDHNNNNNSNSNNNNFFHRG) form a disordered region. The segment covering 2090 to 2107 (VNNMDHNNNNNSNSNNNN) has biased composition (low complexity). An ANK 1 repeat occupies 2116 to 2145 (TNPRNNNITCDRKNMEFLKKLMKNDHDAVQ). The stretch at 2141–2175 (HDAVQCLGKAYSVFHKNFERAQIAFVAVFLHLTGY) is one TPR 3 repeat. Residues 2854–2865 (NLSSNKRSQKGY) are compositionally biased toward polar residues. 9 disordered regions span residues 2854 to 2945 (NLSS…SKEP), 3087 to 3113 (KNRNSNNNNNNNNTNNSNNSNNNNNIN), 3303 to 3344 (NGHT…NDRG), 3561 to 3599 (FSKGKQKKEMQENEDEKIKNKGKNKTKTNDDKKKNSSIN), 3942 to 3998 (TMEN…KDHI), 4076 to 4157 (LFNS…INYY), 4695 to 4716 (EKKNFQDDSIMSNRQSDNKEEG), 4886 to 4972 (SPYF…LRNS), and 4984 to 5051 (YRNK…SNAD). Over residues 2886–2929 (SLDKYNDKEKKNDKINNGDTKNSDDGKIDMDDKKYYNDDLKNSD) the composition is skewed to basic and acidic residues. The span at 3090–3113 (NSNNNNNNNNTNNSNNSNNNNNIN) shows a compositional bias: low complexity. Residues 3316-3335 (YDDDNCDNYDNYDNDNENDN) show a composition bias toward acidic residues. Basic and acidic residues-rich tracts occupy residues 3567–3579 (KKEMQENEDEKIK) and 3965–3974 (PSKDKSKHYN). Low complexity predominate over residues 3975 to 3992 (DNNNNNNDDNNSNNNNDY). Basic and acidic residues predominate over residues 4079-4094 (SKKDGSSNNDKNDNSN). 2 stretches are compositionally biased toward low complexity: residues 4095–4116 (KNRNNYNNNDDNNNNDDNNNNN) and 4124–4157 (NINNNYNNNNNNNNRNNSNSNNSNNSDNNNINYY). Polar residues predominate over residues 4906–4917 (YNIQNSDNSNIG). 2 stretches are compositionally biased toward low complexity: residues 4918–4942 (DSELNVNVNDNDNSSCGSNSKDSLN) and 4953–4972 (NSSSESGNTNSNNENSLRNS). The span at 5026–5045 (KIKKNKSYKNKTHKNKKQKN) shows a compositional bias: basic residues. 5 helical membrane passes run 5058 to 5078 (LYGYTLCLIGTKSIMCCCIIL), 5106 to 5126 (FIKLFFFIDIGISDVLIKYFA), 5552 to 5572 (EEILNIFSIMYLFRICIYYLG), 5716 to 5736 (LPIFLGIDVCRLVYWCCVVYI), and 5815 to 5835 (FLSYVFHCVNICGSSVINQII). Residues 5848 to 5917 (VNKNKGNDNV…NNNNVRNSNN (70 aa)) are disordered. An ANK 2 repeat occupies 6004 to 6032 (GINSLYVNGTNGNLKTDKILLHNFSNFDL). The stretch at 6051–6084 (LVHYFACAAYYIKRADVYNIMNYYNEHTHANFKQ) is one TPR 4 repeat. Disordered regions lie at residues 6495-6527 (EEEKENENEKEVEKDENVHDEKDKVEQIEHEKK), 7123-7147 (EKKKKTGSNNIGSNTNIHELSDNNR), and 7183-7217 (NKNNTSSSSNNNNNNKNNNNNNDNNNDNDNICSNS). Residues 6501-6527 (ENEKEVEKDENVHDEKDKVEQIEHEKK) show a composition bias toward basic and acidic residues. The span at 7129–7147 (GSNNIGSNTNIHELSDNNR) shows a compositional bias: polar residues. 2 TPR repeats span residues 7347 to 7380 (SNDSSNYSLYYIGCKEFKLCIDSYDSIFPAKPFI) and 7577 to 7610 (NNNNDSMNNHKDDMNNYNDNINNYVESMNNYDDI). Low complexity predominate over residues 7571 to 7583 (DDGNNNNNNNDSM). Disordered stretches follow at residues 7571 to 7590 (DDGNNNNNNNDSMNNHKDDM) and 7653 to 7712 (SNER…VNNI). Positions 7696-7706 (DNNKDKDDGNH) are enriched in basic and acidic residues. 3 ANK repeats span residues 7809 to 7839 (KYLTPLMLACRIGCEECVQNIIEKGKVNPNK), 7845 to 7875 (EKETPLMVAAQYGHSRIVCMLICVYGVQVNK), and 7880 to 7917 (GNTALHKILLNYSNTEGKKNSTIKIVQLLLKLGADLTI). Disordered regions lie at residues 8208 to 8300 (LKDD…SAKN) and 8413 to 8448 (ALNSNMSNNNNNNNNSNNNNNNNSNNNNNNYNNNYN). Residues 8219-8259 (YQKPYDKKVINKNKNDNYDKNDNYDKKDNYDTNDKNDKNNC) are compositionally biased toward basic and acidic residues. A compositionally biased stretch (polar residues) spans 8277–8300 (VMNTNSSGRRTISKNSPNLSSAKN). The segment covering 8415–8448 (NSNMSNNNNNNNNSNNNNNNNSNNNNNNYNNNYN) has biased composition (low complexity). TPR repeat units follow at residues 8782–8815 (QTCDKYIYKSEMKEEMYNKSNELYNNSLNNSNNI) and 9550–9584 (DLPIQLSSYLFIKKLLKHDTCLKLWKECLKYITSS). 2 disordered regions span residues 9795–9818 (MGSDNILKDGVHKDNNNQKGHKYD) and 9913–9979 (NVLL…SKNT). Composition is skewed to basic and acidic residues over residues 9800-9818 (ILKDGVHKDNNNQKGHKYD) and 9913-9930 (NVLLRDPHENENMRDDIR). Low complexity predominate over residues 9931–9971 (NNMNNNNNNNNNNNNNNNNNNNNNNNNNNNNNNNNNNNNLN). The 336-residue stretch at 9938–10273 (NNNNNNNNNN…IKNCTAIDLD (336 aa)) folds into the HECT domain. The active-site Glycyl thioester intermediate is the cysteine 10241.

It localises to the membrane. It catalyses the reaction S-ubiquitinyl-[E2 ubiquitin-conjugating enzyme]-L-cysteine + [acceptor protein]-L-lysine = [E2 ubiquitin-conjugating enzyme]-L-cysteine + N(6)-ubiquitinyl-[acceptor protein]-L-lysine.. Its pathway is protein modification; protein ubiquitination. Putative E3 ubiquitin-protein ligase. This is Putative E3 ubiquitin-protein ligase protein PFF1365c from Plasmodium falciparum (isolate 3D7).